A 288-amino-acid polypeptide reads, in one-letter code: Co-chaperone protein DjlA (288 aa).

Residues 1-6 (MEFIGK) are Periplasmic-facing. A helical transmembrane segment spans residues 7-30 (IIGVFLGWKVGGFFGAIAGLILGS). Residues 31 to 288 (IADKKLYELG…DLICKAKGWK (258 aa)) are Cytoplasmic-facing. Positions 222-288 (DAYKVLGVTE…DLICKAKGWK (67 aa)) constitute a J domain.

As to quaternary structure, homodimer.

It is found in the cell inner membrane. Regulatory DnaK co-chaperone. Direct interaction between DnaK and DjlA is needed for the induction of the wcaABCDE operon, involved in the synthesis of a colanic acid polysaccharide capsule, possibly through activation of the RcsB/RcsC phosphotransfer signaling pathway. The colanic acid capsule may help the bacterium survive conditions outside the host. The polypeptide is Co-chaperone protein DjlA (Haemophilus influenzae (strain ATCC 51907 / DSM 11121 / KW20 / Rd)).